The sequence spans 478 residues: MALANPDSLKNSNLSSLPTIAAIATPLGRGGVGVIRLSGTRAYSIACTLTGKSEFKPRMASFCRFYQADGTVVDEGLVLYFKGPHSFTGEDVIELQGHGGMILQNQLLARVFELGAKQAGAGEFSYRAFDNDKLDLVQAEAIADAIDATSAAAASSAIRSLSGEFSKKINQLLEQLIHLRLHVEAAIDFPDEEDVDFLSDGVIQGKLEQTQEKIQHVLATAKQGQLLRDGIHVVLAGRPNAGKSSLLNRLAGQERAIVTDVAGTTRDTLQETVVLNGLTLHLTDTAGLRETEDTVERIGIERARTAITQADILLMVYDVTCDLEEEITPLQLAEQLFGELPEAKCLLIIANKSDLLNHNSSKGMTSISQEEIYNRGYEQVNVSCETGAGIDDLVETLCAKVGFHPPENSLIARTRHLDALRRTAEYLAEAHEQLTVFKAGELVAESLRQAQHSLGEITGEFSADDLLGKIFGSFCIGK.

The (6S)-5-formyl-5,6,7,8-tetrahydrofolate site is built by Arg36, Glu94, and Lys133. Positions 230-402 (GIHVVLAGRP…LVETLCAKVG (173 aa)) constitute a TrmE-type G domain. Asn240 lines the K(+) pocket. Residues 240 to 245 (NAGKSS), 259 to 265 (TDVAGTT), and 284 to 287 (DTAG) contribute to the GTP site. Residue Ser244 participates in Mg(2+) binding. K(+) contacts are provided by Thr259, Val261, and Thr264. Thr265 is a binding site for Mg(2+). Lys478 serves as a coordination point for (6S)-5-formyl-5,6,7,8-tetrahydrofolate.

Belongs to the TRAFAC class TrmE-Era-EngA-EngB-Septin-like GTPase superfamily. TrmE GTPase family. In terms of assembly, homodimer. Heterotetramer of two MnmE and two MnmG subunits. The cofactor is K(+).

The protein resides in the cytoplasm. Exhibits a very high intrinsic GTPase hydrolysis rate. Involved in the addition of a carboxymethylaminomethyl (cmnm) group at the wobble position (U34) of certain tRNAs, forming tRNA-cmnm(5)s(2)U34. The polypeptide is tRNA modification GTPase MnmE (Psychrobacter arcticus (strain DSM 17307 / VKM B-2377 / 273-4)).